The following is a 1055-amino-acid chain: Pre-mRNA-splicing factor ATP-dependent RNA helicase-like protein cdc28 (1055 aa).

A compositionally biased stretch (basic and acidic residues) spans 67 to 78; the sequence is PREGSRPKENYN. The tract at residues 67-184 is disordered; sequence PREGSRPKEN…TERLNDLRER (118 aa). Positions 112–121 are enriched in basic residues; sequence PLKKKSRSKT. Residues 122–132 are compositionally biased toward basic and acidic residues; it reads PKREIARRQRD. The span at 133 to 145 shows a compositional bias: acidic residues; the sequence is EDEWESDEYEEVV. The span at 163–184 shows a compositional bias: basic and acidic residues; the sequence is QNHDYEKSSDPETERLNDLRER. Positions 428-592 constitute a Helicase ATP-binding domain; it reads LKAINEYQVL…FDEAPVFYVP (165 aa). Position 441 to 448 (441 to 448) interacts with ATP; sequence AETGSGKT. The DEAH box signature appears at 539–542; sequence DEAH. One can recognise a Helicase C-terminal domain in the interval 617 to 790; it reads TILQIHTTQP…NIVLLLKSLG (174 aa).

Belongs to the DEAD box helicase family. DEAH subfamily. DDX16/PRP8 sub-subfamily.

The protein localises to the nucleus. The enzyme catalyses ATP + H2O = ADP + phosphate + H(+). Involved in pre-mRNA splicing. Is required together with ATP and at least one other factor, for the first cleavage-ligation reaction. Functions as a molecular motor in the activation of the precatalytic spliceosome for the first transesterification reaction of pre-mRNA splicing by hydrolyzing ATP to cause the activation of the spliceosome without the occurrence of splicing. This chain is Pre-mRNA-splicing factor ATP-dependent RNA helicase-like protein cdc28 (cdc28), found in Schizosaccharomyces pombe (strain 972 / ATCC 24843) (Fission yeast).